The sequence spans 388 residues: Chorismate synthase (388 aa).

The NADP(+) site is built by R39 and R45. FMN contacts are provided by residues 130-132 (RSS), 251-252 (NA), G296, 311-315 (KPIPT), and R337.

Belongs to the chorismate synthase family. As to quaternary structure, homotetramer. FMNH2 is required as a cofactor.

The enzyme catalyses 5-O-(1-carboxyvinyl)-3-phosphoshikimate = chorismate + phosphate. The protein operates within metabolic intermediate biosynthesis; chorismate biosynthesis; chorismate from D-erythrose 4-phosphate and phosphoenolpyruvate: step 7/7. Its function is as follows. Catalyzes the anti-1,4-elimination of the C-3 phosphate and the C-6 proR hydrogen from 5-enolpyruvylshikimate-3-phosphate (EPSP) to yield chorismate, which is the branch point compound that serves as the starting substrate for the three terminal pathways of aromatic amino acid biosynthesis. This reaction introduces a second double bond into the aromatic ring system. The polypeptide is Chorismate synthase (Streptococcus agalactiae serotype Ia (strain ATCC 27591 / A909 / CDC SS700)).